Consider the following 291-residue polypeptide: Elongation factor Ts (291 aa).

Residues 79 to 82 (TDFV) are involved in Mg(2+) ion dislocation from EF-Tu.

The protein belongs to the EF-Ts family.

The protein resides in the cytoplasm. In terms of biological role, associates with the EF-Tu.GDP complex and induces the exchange of GDP to GTP. It remains bound to the aminoacyl-tRNA.EF-Tu.GTP complex up to the GTP hydrolysis stage on the ribosome. This is Elongation factor Ts from Jannaschia sp. (strain CCS1).